Consider the following 402-residue polypeptide: 1-deoxy-D-xylulose 5-phosphate reductoisomerase (402 aa).

NADPH is bound by residues T10, G11, S12, I13, N38, and N124. K125 provides a ligand contact to 1-deoxy-D-xylulose 5-phosphate. E126 contributes to the NADPH binding site. D150 lines the Mn(2+) pocket. Residues S151, E152, S186, and H209 each coordinate 1-deoxy-D-xylulose 5-phosphate. E152 lines the Mn(2+) pocket. NADPH is bound at residue G215. 1-deoxy-D-xylulose 5-phosphate-binding residues include S222, N227, K228, and E231. A Mn(2+)-binding site is contributed by E231.

Belongs to the DXR family. Requires Mg(2+) as cofactor. The cofactor is Mn(2+).

It carries out the reaction 2-C-methyl-D-erythritol 4-phosphate + NADP(+) = 1-deoxy-D-xylulose 5-phosphate + NADPH + H(+). The protein operates within isoprenoid biosynthesis; isopentenyl diphosphate biosynthesis via DXP pathway; isopentenyl diphosphate from 1-deoxy-D-xylulose 5-phosphate: step 1/6. Its function is as follows. Catalyzes the NADPH-dependent rearrangement and reduction of 1-deoxy-D-xylulose-5-phosphate (DXP) to 2-C-methyl-D-erythritol 4-phosphate (MEP). The chain is 1-deoxy-D-xylulose 5-phosphate reductoisomerase from Vibrio vulnificus (strain CMCP6).